A 182-amino-acid chain; its full sequence is Protein YopQ (182 aa).

A signal peptide spans 1–24 (MFIKDAYNMRALCTALEQSAPDTI).

Its subcellular location is the secreted. Functionally, may function as a virulence determinant. This is Protein YopQ (yopQ) from Yersinia enterocolitica.